The sequence spans 509 residues: MDVEQKKPLIESSDRNLPDFKKSVKLKYVKLGYHYLITHGMYLFLSPLVLVIAAQISTFSVTDLRSLWEHLQYNLISVVVCSMLLVFLMTIYFMTRPRPVYLVNFSCFKPDESRKCTKKIFMDRSKLTGSFTEENLEFQRKILQRSGLGESTYLPEAVLNVPPNPCMKEARKEAETVMFGAIDELLAKTNVNPKDIGILIVNCSLFNPTPSLSAMVVNHYKLRGNILSYNLGGMGCSAGLISIDLAKHLLHSIPNTYAMVISMENITLNWYFGNDRSKLVSNCLFRMGGAAILLSNKRWDRRRSKYELVDTVRTHKGADDKCFGCITQEEDSASKIGVTLSKELMAVAGDALKTNITTLGPLVLPTSEQLLFFATLVGRKLFKMKIKPYIPDFKLAFEHFCIHAGGRAVLDELEKNLKLTEWHMEPSRMTLYRFGNTSSSSLWYELAYSEAKGRIKKGDRIWQIAFGSGFKCNSSVWRAVRSVNPKKEKNPWMDEIHEFPVEVPKVSTI.

The next 2 membrane-spanning stretches (helical) occupy residues 36 to 56 (LITHGMYLFLSPLVLVIAAQI) and 75 to 95 (LISVVVCSMLLVFLMTIYFMT). Positions 92 to 381 (YFMTRPRPVY…FFATLVGRKL (290 aa)) constitute an FAE domain. Catalysis depends on residues C236, H315, H399, H403, and N436.

The protein belongs to the thiolase-like superfamily. Chalcone/stilbene synthases family. Only expressed in guard cells. Expressed in siliques, flowers, leaves, stems, roots and seedlings.

The protein localises to the membrane. It catalyses the reaction a very-long-chain acyl-CoA + malonyl-CoA + H(+) = a very-long-chain 3-oxoacyl-CoA + CO2 + CoA. Its pathway is lipid metabolism; fatty acid biosynthesis. Functionally, active on both saturated and mono-unsaturated acyl chains C16 to C20. The polypeptide is 3-ketoacyl-CoA synthase 11 (Arabidopsis thaliana (Mouse-ear cress)).